A 516-amino-acid chain; its full sequence is Extracellular endo-inulinase inuA (516 aa).

The first 25 residues, Met1–Ser25, serve as a signal peptide directing secretion. Residues Trp40–Glu43, Gln59, Trp67, and Phe99–Thr100 contribute to the substrate site. Glu43 is an active-site residue. The N-linked (GlcNAc...) asparagine glycan is linked to Asn109. Residue Arg175–Asp176 coordinates substrate. Residue Asn210 is glycosylated (N-linked (GlcNAc...) asparagine). Position 233 (Glu233) interacts with substrate. N-linked (GlcNAc...) asparagine glycans are attached at residues Asn372 and Asn419.

The protein belongs to the glycosyl hydrolase 32 family.

Its subcellular location is the secreted. It catalyses the reaction Endohydrolysis of (2-&gt;1)-beta-D-fructosidic linkages in inulin.. Activity is stimulated by Mn(2+), Fe(2+) Ca(2+) metal ions and DTT; and inhibited by glucose, Mg(2+), Zn(2+), Cu(2+), Hg(2+), Al(3+), and Fe(3+). Its function is as follows. Endo-inulinase involved in utilization of the plant storage polymer inulin, consisting of fructooligosaccharides with a degree of polymerization (DP) value from 2 to 60. This chain is Extracellular endo-inulinase inuA (inuA), found in Aspergillus niger.